The chain runs to 167 residues: Phosphopantetheine adenylyltransferase (167 aa).

Ser8 contributes to the substrate binding site. ATP is bound by residues Ser8–Phe9 and His16. Residues Lys40, Leu74, and Arg88 each contribute to the substrate site. ATP-binding positions include Gly89–Arg91, Glu99, and Trp123–Ser129.

Belongs to the bacterial CoaD family. In terms of assembly, homohexamer. It depends on Mg(2+) as a cofactor.

The protein resides in the cytoplasm. The enzyme catalyses (R)-4'-phosphopantetheine + ATP + H(+) = 3'-dephospho-CoA + diphosphate. It participates in cofactor biosynthesis; coenzyme A biosynthesis; CoA from (R)-pantothenate: step 4/5. Functionally, reversibly transfers an adenylyl group from ATP to 4'-phosphopantetheine, yielding dephospho-CoA (dPCoA) and pyrophosphate. This chain is Phosphopantetheine adenylyltransferase, found in Deinococcus radiodurans (strain ATCC 13939 / DSM 20539 / JCM 16871 / CCUG 27074 / LMG 4051 / NBRC 15346 / NCIMB 9279 / VKM B-1422 / R1).